A 106-amino-acid polypeptide reads, in one-letter code: Putative double-stranded DNA mimic protein VV1228 (106 aa).

This sequence belongs to the putative dsDNA mimic protein family.

Functionally, may act as a double-stranded DNA (dsDNA) mimic. Probably regulates the activity of a dsDNA-binding protein. In Vibrio vulnificus (strain YJ016), this protein is Putative double-stranded DNA mimic protein VV1228.